The chain runs to 403 residues: Acetate kinase (403 aa).

Position 7 (asparagine 7) interacts with Mg(2+). Lysine 14 is an ATP binding site. Arginine 90 provides a ligand contact to substrate. Aspartate 147 acts as the Proton donor/acceptor in catalysis. ATP contacts are provided by residues 207-211, 283-285, and 331-335; these read HIGNG, DMR, and GVGEN. Mg(2+) is bound at residue glutamate 386.

It belongs to the acetokinase family. In terms of assembly, homodimer. Requires Mg(2+) as cofactor. Mn(2+) serves as cofactor.

The protein localises to the cytoplasm. It catalyses the reaction acetate + ATP = acetyl phosphate + ADP. The protein operates within metabolic intermediate biosynthesis; acetyl-CoA biosynthesis; acetyl-CoA from acetate: step 1/2. Its function is as follows. Catalyzes the formation of acetyl phosphate from acetate and ATP. Can also catalyze the reverse reaction. The protein is Acetate kinase of Thermotoga sp. (strain RQ2).